A 202-amino-acid polypeptide reads, in one-letter code: Small ribosomal subunit protein uS4 (202 aa).

Residues Leu15 to Arg42 form a disordered region. The S4 RNA-binding domain maps to Asn90–Asn152.

This sequence belongs to the universal ribosomal protein uS4 family. Part of the 30S ribosomal subunit. Contacts protein S5. The interaction surface between S4 and S5 is involved in control of translational fidelity.

In terms of biological role, one of the primary rRNA binding proteins, it binds directly to 16S rRNA where it nucleates assembly of the body of the 30S subunit. With S5 and S12 plays an important role in translational accuracy. The sequence is that of Small ribosomal subunit protein uS4 from Synechococcus sp. (strain WH7803).